We begin with the raw amino-acid sequence, 455 residues long: Protein indeterminate-domain 7 (455 aa).

The disordered stretch occupies residues 1-52; that stretch reads MMMNRDILFHQQQQQQMEENMSNLTSASGDQASVSSGNRTETSGSNINQHHQ. Residues 17 to 49 show a composition bias toward polar residues; it reads MEENMSNLTSASGDQASVSSGNRTETSGSNINQ. Position 82 is a phosphoserine (Ser82). 2 consecutive C2H2-type zinc fingers follow at residues 92-114 and 134-164; these read FICEVCNKGFQRDQNLQLHKRGH and YVCPEPGCVHHHPSRALGDLTGIKKHFFRKH. Residues 156-163 carry the Nuclear localization signal motif; the sequence is IKKHFFRK. The segment at 169-192 adopts a C2H2-type 2; degenerate zinc-finger fold; it reads WKCEKCSKKYAVQSDWKAHAKTCG. Cys171, Cys174, His187, Cys191, Cys198, Cys200, His213, and Cys217 together coordinate Zn(2+). A CCHC-type 2; atypical zinc finger spans residues 196 to 219; the sequence is YKCDCGTLFSRRDSFITHRAFCDA. The SHR-binding stretch occupies residues 206–218; it reads RRDSFITHRAFCD. The interval 235-351 is disordered; it reads QASNSPHHHH…PEEEERSSRS (117 aa). Composition is skewed to low complexity over residues 248 to 265 and 288 to 299; these read QQNIGFSSSSQNIISNSN and SSNPNPNGNNGN.

The protein localises to the nucleus. In terms of biological role, probable transcription factor. The sequence is that of Protein indeterminate-domain 7 from Arabidopsis thaliana (Mouse-ear cress).